A 321-amino-acid polypeptide reads, in one-letter code: Ribonuclease Z (321 aa).

H62, H64, D66, H67, H139, D209, and H268 together coordinate Zn(2+). D66 functions as the Proton acceptor in the catalytic mechanism.

It belongs to the RNase Z family. Homodimer. Zn(2+) is required as a cofactor.

The catalysed reaction is Endonucleolytic cleavage of RNA, removing extra 3' nucleotides from tRNA precursor, generating 3' termini of tRNAs. A 3'-hydroxy group is left at the tRNA terminus and a 5'-phosphoryl group is left at the trailer molecule.. Zinc phosphodiesterase, which displays some tRNA 3'-processing endonuclease activity. Probably involved in tRNA maturation, by removing a 3'-trailer from precursor tRNA. This chain is Ribonuclease Z, found in Pseudomonas putida (strain W619).